The following is an 83-amino-acid chain: Small ribosomal subunit protein bS20 (83 aa).

Belongs to the bacterial ribosomal protein bS20 family.

Its function is as follows. Binds directly to 16S ribosomal RNA. This chain is Small ribosomal subunit protein bS20, found in Leuconostoc mesenteroides subsp. mesenteroides (strain ATCC 8293 / DSM 20343 / BCRC 11652 / CCM 1803 / JCM 6124 / NCDO 523 / NBRC 100496 / NCIMB 8023 / NCTC 12954 / NRRL B-1118 / 37Y).